A 176-amino-acid chain; its full sequence is MASGDVEYRCFVGGLAWATDDRALETAFAQYGDVIDSKIINDRETGRSRGFGFVTFKDEKAMKDAIEGMNGQDLDGRSITVNEAQSRGSGGGGGHRGGGGGGYRSGGGGGYSGGGGSYGGGGGRREGGGGYSGGGGGYSSRGGGGGSYGGGRREGGGGYGGGEGGGYGGSGGGGGW.

N-acetylalanine is present on A2. Positions 2–41 (ASGDVEYRCFVGGLAWATDDRALETAFAQYGDVIDSKIIN) are required for RNA chaperone activity. Positions 8 to 86 (YRCFVGGLAW…RSITVNEAQS (79 aa)) constitute an RRM domain. At R49 the chain carries ADP-ribosylarginine; by HopU1. The interval 83-103 (EAQSRGSGGGGGHRGGGGGGY) is disordered. Residues 88-103 (GSGGGGGHRGGGGGGY) show a composition bias toward gly residues. A glycine-rich (GR) required for cell-to-cell movement region spans residues 88–175 (GSGGGGGHRG…GYGGSGGGGG (88 aa)). A nuclear targeting sequence (M9) region spans residues 97–148 (GGGGGGYRSGGGGGYSGGGGSYGGGGGRREGGGGYSGGGGGYSSRGGGGGSY). Phosphoserine is present on residues S105 and S117. The tract at residues 131–176 (YSGGGGGYSSRGGGGGSYGGGRREGGGGYGGGEGGGYGGSGGGGGW) is disordered.

This sequence belongs to the GR-RBP family. Interacts with TRN1. Interacts with the Pseudomonas syringae type III effector HopU1. Binds to small phloem-mobile single-stranded RNAs (ss-sRNA, e.g. small interfering RNA (siRNA) and microRNA (miRNA)) in the phloeme exudate, including viral-derived sRNA (vsiRNA). ADP-ribosylated by the Pseudomonas syringae type III effector HopU1. ADP-ribosylation reduces the ability of the protein to bind RNA. As to expression, ubiquitous with strong expression in guard cell.

It localises to the cytoplasm. The protein resides in the nucleus. The protein localises to the secreted. Its function is as follows. Plays a role in RNA transcription or processing during stress. Binds RNAs and DNAs sequence with a preference to single-stranded nucleic acids. Displays strong affinity to poly(U) and poly(G) sequence. Involved in mRNA alternative splicing of numerous targets by modulating splice site selection. Negatively regulates the circadian oscillations of its own transcript as well as RBG8 transcript. Forms an interlocked post-transcriptional negative feedback loop with the RBG8 autoregulatory circuit. Both proteins negatively autoregulate and reciprocally crossregulate by binding to their pre-mRNAs and promoting unproductive splicing coupled to degradation via the NMD pathway. Involved in the regulation of abscisic acid and stress responses. Affects the growth and stress tolerance under high salt and dehydration stress conditions, and also confers freezing tolerance, particularly via the regulation of stomatal opening and closing in the guard cells. Exhibits RNA chaperone activity during the cold adaptation process. Involved in the export of mRNAs from the nucleus to the cytoplasm under cold stress conditions. Target of the Pseudomonas syringae type III effector HopU1, which could probably be involved in plant innate immunity. Component of the flowering autonomous pathway which promotes floral transition, at least partly by down-regulating FLC. Mediates cell-to-cell trafficking of RNA interference (RNAi) signals (small RNAs (sRNA), e.g. small interfering RNA (siRNA) and microRNA (miRNA)) which regulate growth and development, as well as responses to environmental inputs, including pathogen attack; can compromise zucchini yellow mosaic virus (ZYMV) and tobacco rattle virus (TRV) infections at the early stage. The chain is Glycine-rich RNA-binding protein 7 from Arabidopsis thaliana (Mouse-ear cress).